Reading from the N-terminus, the 570-residue chain is Serine/threonine-protein kinase Pink1, mitochondrial (570 aa).

The N-terminal 5 residues, 1–5, are a transit peptide targeting the mitochondrion; sequence MSVRA. Residues 6 to 96 lie on the Mitochondrial intermembrane side of the membrane; that stretch reads VGSRLFKHGR…AELRKKATRR (91 aa). Residues 97 to 120 form a helical membrane-spanning segment; that stretch reads ILFGDSAPFFALVGVSIASGTGIL. Residues 121-570 are Cytoplasmic-facing; the sequence is TKEEELEGVC…WIQENLPELD (450 aa). A Protein kinase domain is found at 162–484; the sequence is LSLGKPIAKG…VAANVCQLFL (323 aa). An ATP-binding site is contributed by Lys-196. Ser-205 is subject to Phosphoserine; by autocatalysis. Glu-217 serves as a coordination point for Mg(2+). Residues Lys-295, Tyr-297, and Asn-300 each contribute to the ATP site. The active-site Proton acceptor is Asp-337. Asp-341 is an ATP binding site. Positions 342 and 359 each coordinate Mg(2+). Asp-359 provides a ligand contact to ATP. A Phosphoserine; by autocatalysis modification is found at Ser-377. A Phosphothreonine; by autocatalysis modification is found at Thr-386. Thr-530 is subject to Phosphothreonine.

The protein belongs to the protein kinase superfamily. Ser/Thr protein kinase family. Mg(2+) serves as cofactor. Post-translationally, proteolytically cleaved. In healthy cells, the precursor is continuously imported into mitochondria where it is proteolytically cleaved into its short form by the mitochondrial rhomboid protease rho-7 (TcasGA2_TC013516). The short form is then released into the cytosol where it rapidly undergoes proteasome-dependent degradation. In unhealthy cells, when cellular stress conditions lead to the loss of mitochondrial membrane potential, mitochondrial import is impaired leading to the precursor accumulating on the outer mitochondrial membrane (OMM). Autophosphorylated on Ser-205, which activates kinase activity and is required for substrate recognition. Loss of mitochondrial membrane potential results in the precursor accumulating on the outer mitochondrial membrane (OMM) where it is activated by autophosphorylation at Ser-205. Autophosphorylation is sufficient and essential for selective recruitment of park to depolarized mitochondria, likely via Pink1-dependent phosphorylation of polyubiquitin chains. Also autophosphorylated at Ser-377, Thr-386 and possibly Thr-530. Another report found evidence of autophosphorylation at Ser-154, Thr-186, Thr-218, Ser-267 and Thr-530, as well as a number of other minor sites, but determined that phosphorylation at these sites is not required for enzyme activity and may not occur in vivo.

It localises to the mitochondrion outer membrane. It is found in the mitochondrion inner membrane. The protein localises to the cytoplasm. Its subcellular location is the cytosol. It carries out the reaction L-seryl-[protein] + ATP = O-phospho-L-seryl-[protein] + ADP + H(+). The catalysed reaction is L-threonyl-[protein] + ATP = O-phospho-L-threonyl-[protein] + ADP + H(+). Functionally, acts as a serine/threonine-protein kinase. Exhibits a substrate preference for proline at position P+1 and a general preference at several residues for basic residues such as arginine. Also exhibits moderate preferences for a phosphotyrosine at position P-3 and a tryptophan at P-5. Critical to mitochondrial homeostasis it mediates several pathways that maintain mitochondrial health and function. Protects against mitochondrial dysfunction during cellular stress by phosphorylating mitochondrial proteins such as park and likely Drp1, to coordinate mitochondrial quality control mechanisms that remove and replace dysfunctional mitochondrial components. Depending on the severity of mitochondrial damage and/or dysfunction, activity ranges from preventing apoptosis and stimulating mitochondrial biogenesis to regulating mitochondrial dynamics and eliminating severely damaged mitochondria via mitophagy. Appears to be particularly important in maintaining the physiology and function of cells with high energy demands that are undergoing stress or altered metabolic environment, including spermatids, muscle cells and neurons such as the dopaminergic (DA) neurons. Mediates the translocation and activation of park at the outer membrane (OMM) of dysfunctional/depolarized mitochondria. At the OMM of damaged mitochondria, phosphorylates pre-existing polyubiquitin chains, the Pink1-phosphorylated polyubiquitin then recruits park from the cytosol to the OMM where park is fully activated by phosphorylation at 'Ser-80' by Pink1. When cellular stress results in irreversible mitochondrial damage, functions with park to promote the clearance of dysfunctional and/or depolarized mitochondria by selective autophagy (mitophagy). The Pink1-park pathway also promotes fission and/or inhibits fusion of damaged mitochondria, by phosphorylating and thus promoting the park-dependent degradation of proteins involved in mitochondrial fusion/fission such as Marf, Opa1 and fzo. This prevents the refusion of unhealthy mitochondria with the mitochondrial network or initiates mitochondrial fragmentation facilitating their later engulfment by autophagosomes. Also likely to promote mitochondrial fission independently of park and Atg7-mediated mitophagy, via the phosphorylation and activation of Drp1. Regulates motility of damaged mitochondria by phosphorylating Miro which likely promotes its park-dependent degradation by the proteasome; in motor neurons, this inhibits mitochondrial intracellular anterograde transport along the axons which probably increases the chance of the mitochondria being eliminated in the soma. The Pink1-park pathway is also involved in mitochondrial regeneration processes such as promoting mitochondrial biogenesis, activating localized mitochondrial repair, promoting selective turnover of mitochondrial proteins and initiating the mitochondrial import of endogenous proteins. Involved in mitochondrial biogenesis by promoting the park-dependent ubiquitination of transcriptional repressor Paris which leads to its subsequent proteasomal degradation and allows activation of the transcription factor srl. Functions with park to promote localized mitochondrial repair by activating the translation of specific nuclear-encoded mitochondrial RNAs (nc-mtRNAs) on the mitochondrial surface, including several key electron transport chain component nc-mtRNAs. During oogenesis, phosphorylates and inactivates larp on the membrane of defective mitochondria, thus impairing local translation and mtDNA replication and consequently, reducing transmission of deleterious mtDNA mutations to the mature oocyte. Phosphorylates the mitochondrial acyl-CoA dehydrogenase Mcad, and appears to be important for maintaining fatty acid and amino acid metabolism via a mechanism that is independent of it's role in maintaining production of ATP. The chain is Serine/threonine-protein kinase Pink1, mitochondrial from Tribolium castaneum (Red flour beetle).